The following is a 486-amino-acid chain: Small ribosomal subunit protein uS4m (486 aa).

In terms of domain architecture, S4 RNA-binding spans 103–172 (KRLDFALFRA…AKKPSFQEAL (70 aa)).

Belongs to the universal ribosomal protein uS4 family. As to quaternary structure, component of the mitochondrial small ribosomal subunit (mt-SSU). Mature yeast 74S mitochondrial ribosomes consist of a small (37S) and a large (54S) subunit. The 37S small subunit contains a 15S ribosomal RNA (15S mt-rRNA) and 34 different proteins. The 54S large subunit contains a 21S rRNA (21S mt-rRNA) and 46 different proteins. uS3m, uS4m and uS5m form the narrow entry site of the mRNA channel.

The protein localises to the mitochondrion. In terms of biological role, component of the mitochondrial ribosome (mitoribosome), a dedicated translation machinery responsible for the synthesis of mitochondrial genome-encoded proteins, including at least some of the essential transmembrane subunits of the mitochondrial respiratory chain. The mitoribosomes are attached to the mitochondrial inner membrane and translation products are cotranslationally integrated into the membrane. The chain is Small ribosomal subunit protein uS4m (NAM9) from Saccharomyces cerevisiae (strain ATCC 204508 / S288c) (Baker's yeast).